We begin with the raw amino-acid sequence, 313 residues long: Acetyl-coenzyme A carboxylase carboxyl transferase subunit alpha (313 aa).

The CoA carboxyltransferase C-terminal domain occupies 42 to 292 (KSDKLLRDTY…GAAIGEELDK (251 aa)).

Belongs to the AccA family. As to quaternary structure, acetyl-CoA carboxylase is a heterohexamer composed of biotin carboxyl carrier protein (AccB), biotin carboxylase (AccC) and two subunits each of ACCase subunit alpha (AccA) and ACCase subunit beta (AccD).

Its subcellular location is the cytoplasm. It catalyses the reaction N(6)-carboxybiotinyl-L-lysyl-[protein] + acetyl-CoA = N(6)-biotinyl-L-lysyl-[protein] + malonyl-CoA. The protein operates within lipid metabolism; malonyl-CoA biosynthesis; malonyl-CoA from acetyl-CoA: step 1/1. In terms of biological role, component of the acetyl coenzyme A carboxylase (ACC) complex. First, biotin carboxylase catalyzes the carboxylation of biotin on its carrier protein (BCCP) and then the CO(2) group is transferred by the carboxyltransferase to acetyl-CoA to form malonyl-CoA. The polypeptide is Acetyl-coenzyme A carboxylase carboxyl transferase subunit alpha (Rhizorhabdus wittichii (strain DSM 6014 / CCUG 31198 / JCM 15750 / NBRC 105917 / EY 4224 / RW1) (Sphingomonas wittichii)).